Reading from the N-terminus, the 355-residue chain is RNA 3'-terminal phosphate cyclase (355 aa).

Residues Gln-100 and His-300–Gln-304 contribute to the ATP site. His-325 acts as the Tele-AMP-histidine intermediate in catalysis.

Belongs to the RNA 3'-terminal cyclase family. Type 1 subfamily.

It localises to the cytoplasm. It carries out the reaction a 3'-end 3'-phospho-ribonucleotide-RNA + ATP = a 3'-end 2',3'-cyclophospho-ribonucleotide-RNA + AMP + diphosphate. In terms of biological role, catalyzes the conversion of 3'-phosphate to a 2',3'-cyclic phosphodiester at the end of RNA. The mechanism of action of the enzyme occurs in 3 steps: (A) adenylation of the enzyme by ATP; (B) transfer of adenylate to an RNA-N3'P to produce RNA-N3'PP5'A; (C) and attack of the adjacent 2'-hydroxyl on the 3'-phosphorus in the diester linkage to produce the cyclic end product. The biological role of this enzyme is unknown but it is likely to function in some aspects of cellular RNA processing. The polypeptide is RNA 3'-terminal phosphate cyclase (Methanosarcina acetivorans (strain ATCC 35395 / DSM 2834 / JCM 12185 / C2A)).